Consider the following 126-residue polypeptide: Methylglyoxal synthase (126 aa).

An MGS-like domain is found at Met1–Asn126. Substrate-binding positions include His12, Lys16, Thr38–Thr41, and Ser59–Gly60. Asp65 (proton donor/acceptor) is an active-site residue. His92 is a binding site for substrate.

It belongs to the methylglyoxal synthase family.

It catalyses the reaction dihydroxyacetone phosphate = methylglyoxal + phosphate. In terms of biological role, catalyzes the formation of methylglyoxal from dihydroxyacetone phosphate. This chain is Methylglyoxal synthase, found in Rhizobium meliloti (strain 1021) (Ensifer meliloti).